A 196-amino-acid chain; its full sequence is Nucleoid occlusion factor SlmA (196 aa).

An HTH tetR-type domain is found at 7–68 (PNRRDEILQA…GLIEFIEESI (62 aa)). A DNA-binding region (H-T-H motif) is located at residues 31-50 (TTAKLAKQVGVSEAALYRHF). Positions 71–93 (RVNRILEDEKDTLKRIELLLKLL) form a coiled coil.

The protein belongs to the nucleoid occlusion factor SlmA family. As to quaternary structure, homodimer. Interacts with FtsZ.

Its subcellular location is the cytoplasm. The protein localises to the nucleoid. In terms of biological role, required for nucleoid occlusion (NO) phenomenon, which prevents Z-ring formation and cell division over the nucleoid. Acts as a DNA-associated cell division inhibitor that binds simultaneously chromosomal DNA and FtsZ, and disrupts the assembly of FtsZ polymers. SlmA-DNA-binding sequences (SBS) are dispersed on non-Ter regions of the chromosome, preventing FtsZ polymerization at these regions. This Aliivibrio fischeri (strain MJ11) (Vibrio fischeri) protein is Nucleoid occlusion factor SlmA.